We begin with the raw amino-acid sequence, 333 residues long: G-protein coupled receptor 146 (333 aa).

Topologically, residues 1-21 (MWSCEDLNYTNSGEEQYLCNE) are extracellular. The N-linked (GlcNAc...) asparagine glycan is linked to Asn-8. The chain crosses the membrane as a helical span at residues 22–42 (FHLFLFIFSVLYLIICFPVGL). The Cytoplasmic segment spans residues 43–65 (CYNVQLVLVNLYNKATMTMPDVY). Residues 66-86 (FVNMAIAGLIINAVAPVYLFG) traverse the membrane as a helical segment. Residues 87–102 (PAYTKWSLWSFGNEVY) lie on the Extracellular side of the membrane. The chain crosses the membrane as a helical span at residues 103 to 123 (ITLLILFNVSSLVIMYSTTLL). Residues 124–146 (SLDYYIECALPRTYMSSVYNTKH) lie on the Cytoplasmic side of the membrane. The chain crosses the membrane as a helical span at residues 147–167 (VCGFIWGGAVLTSFSSLLFYI). Topologically, residues 168–189 (CNHVSTKIIECSKMQNREAADA) are extracellular. The helical transmembrane segment at 190–210 (IMVLIGYVVPIIAVIYALVLI) threads the bilayer. The Cytoplasmic segment spans residues 211-234 (LQIRKEATPLDQESGRLDPSVHRL). The chain crosses the membrane as a helical span at residues 235-255 (LIATVCTQFILWTPYYVTLLV). Over 256-275 (NTFMDARVKSSNTFYIRIFQ) the chain is Extracellular. Residues 276-296 (FTEGLSNFLAFSSSFVLPLIH) form a helical membrane-spanning segment. At 297–333 (RHINKNFSGKLQRLLKRLHCGSQGCTHEHTVVQQVMT) the chain is on the cytoplasmic side.

It belongs to the G-protein coupled receptor 1 family.

It is found in the cell membrane. Its function is as follows. G-protein coupled receptor required for the regulation of plasma cholesterol levels. In Xenopus laevis (African clawed frog), this protein is G-protein coupled receptor 146 (gpr146).